Reading from the N-terminus, the 242-residue chain is Probable 2-phosphosulfolactate phosphatase (242 aa).

This sequence belongs to the ComB family. Mg(2+) serves as cofactor.

The catalysed reaction is (2R)-O-phospho-3-sulfolactate + H2O = (2R)-3-sulfolactate + phosphate. The sequence is that of Probable 2-phosphosulfolactate phosphatase from Picosynechococcus sp. (strain ATCC 27264 / PCC 7002 / PR-6) (Agmenellum quadruplicatum).